The chain runs to 114 residues: UPF0473 protein OEOE_1164 (114 aa).

It belongs to the UPF0473 family.

This Oenococcus oeni (strain ATCC BAA-331 / PSU-1) protein is UPF0473 protein OEOE_1164.